Here is a 290-residue protein sequence, read N- to C-terminus: Nucleotide-binding protein BAV3158 (290 aa).

Residue 9–16 (GISGSGKS) coordinates ATP. Position 58–61 (58–61 (DVRS)) interacts with GTP.

The protein belongs to the RapZ-like family.

Functionally, displays ATPase and GTPase activities. This chain is Nucleotide-binding protein BAV3158, found in Bordetella avium (strain 197N).